A 333-amino-acid chain; its full sequence is Adenosine deaminase (333 aa).

Zn(2+) is bound by residues histidine 12 and histidine 14. Residues histidine 14 and aspartate 16 each contribute to the substrate site. Pentostatin-binding positions include 14 to 16 (HLD), serine 141, and glycine 170. Glycine 170 is a binding site for substrate. Histidine 197 contacts Zn(2+). Pentostatin is bound by residues glutamate 200, histidine 221, and aspartate 278. Catalysis depends on glutamate 200, which acts as the Proton donor. Zn(2+) is bound at residue aspartate 278. Aspartate 279 is a substrate binding site.

Belongs to the metallo-dependent hydrolases superfamily. Adenosine and AMP deaminases family. Adenosine deaminase subfamily. Zn(2+) is required as a cofactor.

The catalysed reaction is adenosine + H2O + H(+) = inosine + NH4(+). It carries out the reaction 2'-deoxyadenosine + H2O + H(+) = 2'-deoxyinosine + NH4(+). Catalyzes the hydrolytic deamination of adenosine and 2-deoxyadenosine. The protein is Adenosine deaminase of Salmonella typhimurium (strain LT2 / SGSC1412 / ATCC 700720).